A 362-amino-acid polypeptide reads, in one-letter code: Cobalt-precorrin-5B C(1)-methyltransferase (362 aa).

The protein belongs to the CbiD family.

The enzyme catalyses Co-precorrin-5B + S-adenosyl-L-methionine = Co-precorrin-6A + S-adenosyl-L-homocysteine. It functions in the pathway cofactor biosynthesis; adenosylcobalamin biosynthesis; cob(II)yrinate a,c-diamide from sirohydrochlorin (anaerobic route): step 6/10. Functionally, catalyzes the methylation of C-1 in cobalt-precorrin-5B to form cobalt-precorrin-6A. This is Cobalt-precorrin-5B C(1)-methyltransferase from Methanocaldococcus jannaschii (strain ATCC 43067 / DSM 2661 / JAL-1 / JCM 10045 / NBRC 100440) (Methanococcus jannaschii).